Consider the following 311-residue polypeptide: MENQSSISEFFLRGISAPPEQQQSLFGIFLCMYLVTLTGNLLIILAIGSDLHLHTPMYFFLANLSFVDMGLTSSTVTKMLVNIQTRHHTISYTGCLTQMYFFLMFGDLDSFFLAAMAYDRYVAICHPLCYSTVMRPQVCALMLALCWVLTNIVALTHTFLMARLSFCVTGEIAHFFCDITPVLKLSCSDTHINEMMVFVLGGTVLIVPFLCIVTSYIHIVPAILRVRTRGGVGKAFSTCSSHLCVVCVFYGTLFSAYLCPPSIASEEKDIAAAAMYTIVTPMLNPFIYSLRNKDMKGALKRLFSHRSIVSS.

Residues 1-23 (MENQSSISEFFLRGISAPPEQQQ) lie on the Extracellular side of the membrane. An N-linked (GlcNAc...) asparagine glycan is attached at N3. Residues 24-47 (SLFGIFLCMYLVTLTGNLLIILAI) traverse the membrane as a helical segment. The Cytoplasmic portion of the chain corresponds to 48-55 (GSDLHLHT). The chain crosses the membrane as a helical span at residues 56 to 77 (PMYFFLANLSFVDMGLTSSTVT). The Extracellular portion of the chain corresponds to 78 to 98 (KMLVNIQTRHHTISYTGCLTQ). C95 and C187 are disulfide-bonded. The chain crosses the membrane as a helical span at residues 99-118 (MYFFLMFGDLDSFFLAAMAY). Over 119-137 (DRYVAICHPLCYSTVMRPQ) the chain is Cytoplasmic. Residues 138-156 (VCALMLALCWVLTNIVALT) traverse the membrane as a helical segment. Residues 157-194 (HTFLMARLSFCVTGEIAHFFCDITPVLKLSCSDTHINE) lie on the Extracellular side of the membrane. Residues 195–217 (MMVFVLGGTVLIVPFLCIVTSYI) form a helical membrane-spanning segment. Residues 218-234 (HIVPAILRVRTRGGVGK) lie on the Cytoplasmic side of the membrane. The chain crosses the membrane as a helical span at residues 235 to 257 (AFSTCSSHLCVVCVFYGTLFSAY). At 258-270 (LCPPSIASEEKDI) the chain is on the extracellular side. A helical membrane pass occupies residues 271-290 (AAAAMYTIVTPMLNPFIYSL). Residues 291–311 (RNKDMKGALKRLFSHRSIVSS) are Cytoplasmic-facing.

It belongs to the G-protein coupled receptor 1 family.

It localises to the cell membrane. Functionally, odorant receptor. The chain is Olfactory receptor 1N1 (OR1N1) from Homo sapiens (Human).